A 119-amino-acid chain; its full sequence is Large ribosomal subunit protein bL20 (119 aa).

This sequence belongs to the bacterial ribosomal protein bL20 family.

Functionally, binds directly to 23S ribosomal RNA and is necessary for the in vitro assembly process of the 50S ribosomal subunit. It is not involved in the protein synthesizing functions of that subunit. The polypeptide is Large ribosomal subunit protein bL20 (Shewanella amazonensis (strain ATCC BAA-1098 / SB2B)).